Reading from the N-terminus, the 126-residue chain is Small ribosomal subunit protein uS12 (126 aa).

At Asp89 the chain carries 3-methylthioaspartic acid.

This sequence belongs to the universal ribosomal protein uS12 family. As to quaternary structure, part of the 30S ribosomal subunit. Contacts proteins S8 and S17. May interact with IF1 in the 30S initiation complex.

With S4 and S5 plays an important role in translational accuracy. Functionally, interacts with and stabilizes bases of the 16S rRNA that are involved in tRNA selection in the A site and with the mRNA backbone. Located at the interface of the 30S and 50S subunits, it traverses the body of the 30S subunit contacting proteins on the other side and probably holding the rRNA structure together. The combined cluster of proteins S8, S12 and S17 appears to hold together the shoulder and platform of the 30S subunit. The sequence is that of Small ribosomal subunit protein uS12 from Polynucleobacter asymbioticus (strain DSM 18221 / CIP 109841 / QLW-P1DMWA-1) (Polynucleobacter necessarius subsp. asymbioticus).